We begin with the raw amino-acid sequence, 231 residues long: Ribosome maturation factor RimM (231 aa).

Residues Met-1 to Arg-29 form a disordered region. In terms of domain architecture, PRC barrel spans Thr-150 to Tyr-231.

The protein belongs to the RimM family. Binds ribosomal protein uS19.

Its subcellular location is the cytoplasm. An accessory protein needed during the final step in the assembly of 30S ribosomal subunit, possibly for assembly of the head region. Essential for efficient processing of 16S rRNA. May be needed both before and after RbfA during the maturation of 16S rRNA. It has affinity for free ribosomal 30S subunits but not for 70S ribosomes. The sequence is that of Ribosome maturation factor RimM from Paraburkholderia phymatum (strain DSM 17167 / CIP 108236 / LMG 21445 / STM815) (Burkholderia phymatum).